A 294-amino-acid chain; its full sequence is Eukaryotic translation initiation factor 3 subunit G (294 aa).

Disordered regions lie at residues 1 to 43 and 160 to 211; these read MPSA…ENKI and EDDG…RDET. The span at 194-211 shows a compositional bias: basic and acidic residues; that stretch reads GANRRGETMPSRSQRDET. The RRM domain maps to 212-290; sequence ATIRVTNLSE…LILNVEWAKP (79 aa).

Belongs to the eIF-3 subunit G family. In terms of assembly, component of the eukaryotic translation initiation factor 3 (eIF-3) complex.

It localises to the cytoplasm. Its function is as follows. RNA-binding component of the eukaryotic translation initiation factor 3 (eIF-3) complex, which is involved in protein synthesis of a specialized repertoire of mRNAs and, together with other initiation factors, stimulates binding of mRNA and methionyl-tRNAi to the 40S ribosome. The eIF-3 complex specifically targets and initiates translation of a subset of mRNAs involved in cell proliferation. This subunit can bind 18S rRNA. The protein is Eukaryotic translation initiation factor 3 subunit G of Nematostella vectensis (Starlet sea anemone).